Here is a 359-residue protein sequence, read N- to C-terminus: DNA-directed RNA polymerase RPB3-11 homolog (359 aa).

This sequence in the N-terminal section; belongs to the archaeal RpoD/eukaryotic RPB3 RNA polymerase subunit family. In the C-terminal section; belongs to the archaeal RpoL/eukaryotic RPB11/RPC19 RNA polymerase subunit family. Part of the viral DNA-directed RNA polymerase that consists of 8 polII-like subunits (RPB1, RPB2, RPB3, RPB5, RPB6, RPB7, RPB9, RPB10), a capping enzyme and a termination factor.

The protein localises to the host cytoplasm. It is found in the virion. In terms of biological role, component of the DNA-directed RNA polymerase (RNAP) that catalyzes the transcription in the cytoplasm of viral DNA into RNA using the four ribonucleoside triphosphates as substrates. This chain is DNA-directed RNA polymerase RPB3-11 homolog, found in Ornithodoros (relapsing fever ticks).